The chain runs to 174 residues: Guided entry of tail-anchored proteins factor 1 (174 aa).

The Lumenal portion of the chain corresponds to 1-8; the sequence is MSASETDR. Residues 9–29 traverse the membrane as a helical segment; that stretch reads WAWLLVLCFVFGCNVLRILLP. The Cytoplasmic segment spans residues 30–99; the sequence is TLSSFISRVL…VKARTAQLAK (70 aa). Residues 39–94 adopt a coiled-coil conformation; sequence LQKDAEQESQMRAEIQSMKQELSTVNMMDEFARYARLERKINKMTDKLKTHVKART. The interval 39–97 is interaction with GET3/TRC40; the sequence is LQKDAEQESQMRAEIQSMKQELSTVNMMDEFARYARLERKINKMTDKLKTHVKARTAQL. A helical transmembrane segment spans residues 100 to 120; it reads IKWFISVAFYVLQAALMISLI. Topologically, residues 121–148 are lumenal; sequence WKYYSVPVAVVPSKWITPLDRLVAFPTR. The helical transmembrane segment at 149–169 threads the bilayer; the sequence is VAGGIGVTCWILVCNKVVAII. Topologically, residues 170 to 174 are cytoplasmic; the sequence is LHPFS.

Belongs to the WRB/GET1 family. As to quaternary structure, component of the Golgi to ER traffic (GET) complex, which is composed of GET1, CAMLG/GET2 and GET3. Within the complex, GET1 and CAMLG form a heterotetramer which is stabilized by phosphatidylinositol binding and which binds to the GET3 homodimer. Interacts with CAMLG/GET2 (via C-terminus). GET3 shows a higher affinity for CAMLG than for GET1.

It is found in the endoplasmic reticulum membrane. In terms of biological role, required for the post-translational delivery of tail-anchored (TA) proteins to the endoplasmic reticulum. Together with CAMLG/GET2, acts as a membrane receptor for soluble GET3/TRC40, which recognizes and selectively binds the transmembrane domain of TA proteins in the cytosol. Required to ensure correct topology and ER insertion of CAMLG. The sequence is that of Guided entry of tail-anchored proteins factor 1 from Rattus norvegicus (Rat).